We begin with the raw amino-acid sequence, 1052 residues long: Multidrug resistance protein MdtB (1052 aa).

The next 11 membrane-spanning stretches (helical) occupy residues 15–37 (LFILRPVATTLFMIAILLAGIIG), 345–362 (FELLLAIALVVMVIYLFL), 367–389 (ATIIPSIAVPLSLVGTFAAMYFL), 396–418 (LTLMALTIATGFVVDDAIVVIEN), 438–460 (GEIGFTIISLTFSLIAVLIPLLF), 472–494 (FAVTLAVAILISAVVSLTLTPMM), 535–557 (HPWLTLSVAFSTLVLTVILYLLI), 867–889 (LWLIIAAIVAMYIVLGVLYESFI), 909–931 (LMLTGNELDVIAIIGIILLIGIV), 968–990 (ILMTTLAALFGALPLMLSTGVGA), and 1000–1022 (MVGGLIVSQVLTLFTTPVIYLLF). Residues 1032-1052 (KNRHRDEDIDSSELLNGQEPQ) are disordered.

This sequence belongs to the resistance-nodulation-cell division (RND) (TC 2.A.6) family. MdtB subfamily. In terms of assembly, part of a tripartite efflux system composed of MdtA, MdtB and MdtC. MdtB forms a heteromultimer with MdtC.

It is found in the cell inner membrane. The chain is Multidrug resistance protein MdtB from Yersinia pestis.